A 96-amino-acid chain; its full sequence is Acetolactate synthase isozyme 1 small subunit (96 aa).

The 74-residue stretch at 10–83 (ILELTVRNHP…DVVKVQRNQS (74 aa)) folds into the ACT domain.

The protein belongs to the acetolactate synthase small subunit family. In terms of assembly, dimer of large and small chains.

The catalysed reaction is 2 pyruvate + H(+) = (2S)-2-acetolactate + CO2. It functions in the pathway amino-acid biosynthesis; L-isoleucine biosynthesis; L-isoleucine from 2-oxobutanoate: step 1/4. Its pathway is amino-acid biosynthesis; L-valine biosynthesis; L-valine from pyruvate: step 1/4. The polypeptide is Acetolactate synthase isozyme 1 small subunit (ilvN) (Escherichia coli O157:H7).